The chain runs to 331 residues: NADH-quinone oxidoreductase subunit H (331 aa).

A run of 8 helical transmembrane segments spans residues A7–I27, M81–V101, I114–G134, I154–F174, V187–V207, F238–F258, W271–I291, and V310–A330.

Belongs to the complex I subunit 1 family. NDH-1 is composed of 13 different subunits. Subunits NuoA, H, J, K, L, M, N constitute the membrane sector of the complex.

The protein resides in the cell inner membrane. The enzyme catalyses a quinone + NADH + 5 H(+)(in) = a quinol + NAD(+) + 4 H(+)(out). Its function is as follows. NDH-1 shuttles electrons from NADH, via FMN and iron-sulfur (Fe-S) centers, to quinones in the respiratory chain. The immediate electron acceptor for the enzyme in this species is believed to be ubiquinone. Couples the redox reaction to proton translocation (for every two electrons transferred, four hydrogen ions are translocated across the cytoplasmic membrane), and thus conserves the redox energy in a proton gradient. This subunit may bind ubiquinone. The protein is NADH-quinone oxidoreductase subunit H of Pseudomonas aeruginosa (strain ATCC 15692 / DSM 22644 / CIP 104116 / JCM 14847 / LMG 12228 / 1C / PRS 101 / PAO1).